A 599-amino-acid chain; its full sequence is NTPase KAP family P-loop domain-containing protein 1 (599 aa).

The KAP NTPase domain occupies 1–416 (MQQEAAQRES…NTVPITVRLL (416 aa)). The next 3 helical transmembrane spans lie at 25 to 45 (GWGVPKLLWFLVFLQPVITEL), 119 to 139 (VCLALLALLAALCLGVGLLYL), and 156 to 176 (ALGGAATTLSGSGLLMAVYSV). The interval 543-599 (ALKPPSPPKSPSQDGPQASPRAIIAAGTSHAGQGSGHSKEAHQTRDRTHGGKPRPMA) is disordered. Residues 579 to 591 (HSKEAHQTRDRTH) are compositionally biased toward basic and acidic residues.

The protein resides in the membrane. The protein is NTPase KAP family P-loop domain-containing protein 1 (Nkpd1) of Mus musculus (Mouse).